The chain runs to 163 residues: Endoribonuclease YbeY (163 aa).

Zn(2+) is bound by residues H126, H130, and H136.

The protein belongs to the endoribonuclease YbeY family. Zn(2+) is required as a cofactor.

Its subcellular location is the cytoplasm. Functionally, single strand-specific metallo-endoribonuclease involved in late-stage 70S ribosome quality control and in maturation of the 3' terminus of the 16S rRNA. In Chelativorans sp. (strain BNC1), this protein is Endoribonuclease YbeY.